We begin with the raw amino-acid sequence, 513 residues long: RNA-splicing ligase RtcB homolog (513 aa).

5 residues coordinate Mn(2+): Asp-127, Cys-130, His-235, His-267, and His-361. 234–238 lines the GMP pocket; the sequence is NHYAE. Residues 361–362, 410–413, Ser-417, 436–439, and Lys-512 each bind GMP; these read HN, GGTM, and HGAG. His-436 (GMP-histidine intermediate) is an active-site residue.

This sequence belongs to the RtcB family. In terms of assembly, catalytic component of the tRNA-splicing ligase complex. Requires Mn(2+) as cofactor.

It carries out the reaction a 3'-end 3'-phospho-ribonucleotide-RNA + a 5'-end dephospho-ribonucleoside-RNA + GTP = a ribonucleotidyl-ribonucleotide-RNA + GMP + diphosphate. The catalysed reaction is a 3'-end 2',3'-cyclophospho-ribonucleotide-RNA + a 5'-end dephospho-ribonucleoside-RNA + GTP + H2O = a ribonucleotidyl-ribonucleotide-RNA + GMP + diphosphate + H(+). In terms of biological role, catalytic subunit of the tRNA-splicing ligase complex that acts by directly joining spliced tRNA halves to mature-sized tRNAs by incorporating the precursor-derived splice junction phosphate into the mature tRNA as a canonical 3',5'-phosphodiester. May act as an RNA ligase with broad substrate specificity, and may function toward other RNAs. This is RNA-splicing ligase RtcB homolog from Micromonas commoda (strain RCC299 / NOUM17 / CCMP2709) (Picoplanktonic green alga).